Here is a 363-residue protein sequence, read N- to C-terminus: Peptide chain release factor 1 (363 aa).

Q237 is modified (N5-methylglutamine). Residues E284–R296 are compositionally biased toward basic and acidic residues. The disordered stretch occupies residues E284–S306.

This sequence belongs to the prokaryotic/mitochondrial release factor family. Post-translationally, methylated by PrmC. Methylation increases the termination efficiency of RF1.

It localises to the cytoplasm. Functionally, peptide chain release factor 1 directs the termination of translation in response to the peptide chain termination codons UAG and UAA. This chain is Peptide chain release factor 1, found in Shewanella oneidensis (strain ATCC 700550 / JCM 31522 / CIP 106686 / LMG 19005 / NCIMB 14063 / MR-1).